The chain runs to 351 residues: Leukotriene B4 receptor 1 (351 aa).

The Extracellular portion of the chain corresponds to 1–21 (MAANTTSTAATSSPGGMSLSL). N-linked (GlcNAc...) asparagine glycosylation is present at Asn-4. The helical transmembrane segment at 22–44 (LPIVLLSVALVVGLPGNSFVVWS) threads the bilayer. Over 45-56 (ILKRMQKRSVTA) the chain is Cytoplasmic. A helical membrane pass occupies residues 57 to 77 (LLVLNLALADLAVLLTAPFFL). At 78 to 93 (HFLARGTWSFEVTGCR) the chain is on the extracellular side. Residues 94-115 (LCHYVCGVSMYASVLLITIMSL) traverse the membrane as a helical segment. Residues 116 to 140 (DRSLAVARPFVSQKVRTKAFARWVL) are Cytoplasmic-facing. Residues 141–161 (AGIWVVSFLLAIPVLVYRTVT) form a helical membrane-spanning segment. The Extracellular segment spans residues 162-179 (PKNKTLICDSRYPSDGHK). Asn-164 carries N-linked (GlcNAc...) asparagine glycosylation. Residues 180–200 (VFHLLFEAITGFLLPFLAVVA) traverse the membrane as a helical segment. Topologically, residues 201–222 (SYSDIGRRLQARRFRRSRRTGR) are cytoplasmic. The chain crosses the membrane as a helical span at residues 223 to 243 (LVVLIILAFAAFWLPYHLVNL). At 244-268 (VEAGRTLAGWDKNSPAGQRLKLARY) the chain is on the extracellular side. The chain crosses the membrane as a helical span at residues 269–289 (VLIALAFLSSSVNPVLYACAG). Residues 290–351 (GGLLRSAGVG…TSSTPPESSK (62 aa)) lie on the Cytoplasmic side of the membrane. 2 stretches are compositionally biased toward polar residues: residues 311–327 (EVSS…TPKA) and 339–351 (SFMT…ESSK). A disordered region spans residues 311–351 (EVSSTRRGGTLVQTPKATPTCPEPGPTDSFMTSSTPPESSK).

The protein belongs to the G-protein coupled receptor 1 family. In terms of processing, phosphorylated by GRK6 upon leukotriene B4 binding; which promotes desensitization. As to expression, exclusively expressed in polymorphonuclear leukocytes.

The protein resides in the cell membrane. Functionally, receptor for leukotriene B4, a potent chemoattractant involved in inflammation and immune response. This Rattus norvegicus (Rat) protein is Leukotriene B4 receptor 1 (Ltb4r).